The primary structure comprises 64 residues: Large ribosomal subunit protein bL35 (64 aa).

Disordered regions lie at residues Met-1–Gly-20 and Pro-37–Gly-64.

The protein belongs to the bacterial ribosomal protein bL35 family.

This is Large ribosomal subunit protein bL35 from Mycobacterium sp. (strain JLS).